The primary structure comprises 110 residues: uncharacterized protein (110 aa).

Residues 85–110 (ARKAERPSQGGKDYNGTAKSAQSTTV) form a disordered region. Positions 101–110 (TAKSAQSTTV) are enriched in polar residues.

This is an uncharacterized protein from Saccharomyces cerevisiae (strain ATCC 204508 / S288c) (Baker's yeast).